A 304-amino-acid polypeptide reads, in one-letter code: Acetyl-coenzyme A carboxylase carboxyl transferase subunit beta (304 aa).

The 270-residue stretch at 25-294 (LWIKCPETGE…EAARRESGSQ (270 aa)) folds into the CoA carboxyltransferase N-terminal domain.

It belongs to the AccD/PCCB family. Acetyl-CoA carboxylase is a heterohexamer composed of biotin carboxyl carrier protein (AccB), biotin carboxylase (AccC) and two subunits each of ACCase subunit alpha (AccA) and ACCase subunit beta (AccD).

It localises to the cytoplasm. The catalysed reaction is N(6)-carboxybiotinyl-L-lysyl-[protein] + acetyl-CoA = N(6)-biotinyl-L-lysyl-[protein] + malonyl-CoA. Its pathway is lipid metabolism; malonyl-CoA biosynthesis; malonyl-CoA from acetyl-CoA: step 1/1. Functionally, component of the acetyl coenzyme A carboxylase (ACC) complex. Biotin carboxylase (BC) catalyzes the carboxylation of biotin on its carrier protein (BCCP) and then the CO(2) group is transferred by the transcarboxylase to acetyl-CoA to form malonyl-CoA. This chain is Acetyl-coenzyme A carboxylase carboxyl transferase subunit beta, found in Sinorhizobium fredii (strain NBRC 101917 / NGR234).